Reading from the N-terminus, the 444-residue chain is Vacuolar protein sorting-associated protein 4B (444 aa).

Residues Thr4–Lys82 form the MIT domain. A coiled-coil region spans residues Ala19–Lys82. Residues Lys77–Asn118 form a disordered region. Over residues Pro86–Asp101 the composition is skewed to basic and acidic residues. Phosphoserine is present on residues Ser102 and Ser108. Gly174–Ser181 contacts ATP. Ser410 bears the Phosphoserine mark.

The protein belongs to the AAA ATPase family. In terms of assembly, proposed to be monomeric or homodimeric in nucleotide-free form and to oligomerize upon binding to ATP to form two stacked hexameric or heptameric rings with a central pore through which ESCRT-III substrates are translocated in an ATP-dependent manner. In vitro, associates on the inside of a helical tubular structure formed by a CHMP2A-CHMP3 polymer. Interacts with CHMP1A, CHMP1B, CHMP4B and CHMP6. Interacts with CHMP2A. Interacts with VPS4A; the interaction suggests a heteromeric assembly with VPS4A. Interacts with VTA1. In terms of tissue distribution, high level expression seen in the kidney. It is also expressed in the heart, brain, spleen, lung, liver, skeletal muscle, and testis.

The protein localises to the late endosome membrane. The enzyme catalyses ATP + H2O = ADP + phosphate + H(+). Involved in late steps of the endosomal multivesicular bodies (MVB) pathway. Recognizes membrane-associated ESCRT-III assemblies and catalyzes their disassembly, possibly in combination with membrane fission. Redistributes the ESCRT-III components to the cytoplasm for further rounds of MVB sorting. MVBs contain intraluminal vesicles (ILVs) that are generated by invagination and scission from the limiting membrane of the endosome and mostly are delivered to lysosomes enabling degradation of membrane proteins, such as stimulated growth factor receptors, lysosomal enzymes and lipids. VPS4A/B are required for the exosomal release of SDCBP, CD63 and syndecan. Functionally, (Microbial infection) In conjunction with the ESCRT machinery also appears to function in topologically equivalent membrane fission events, such as the terminal stages of cytokinesis and enveloped virus budding (lentiviruses). This is Vacuolar protein sorting-associated protein 4B from Mus musculus (Mouse).